Here is a 201-residue protein sequence, read N- to C-terminus: Large ribosomal subunit protein eL15 (201 aa).

This sequence belongs to the eukaryotic ribosomal protein eL15 family.

The chain is Large ribosomal subunit protein eL15 (RPL15) from Quercus suber (Cork oak).